A 419-amino-acid polypeptide reads, in one-letter code: Tyrosine--tRNA ligase (419 aa).

L-tyrosine is bound at residue Tyr34. The 'HIGH' region motif lies at 39–48 (PSGDSMHIGH). 2 residues coordinate L-tyrosine: Tyr168 and Gln172. A 'KMSKS' region motif is present at residues 230–234 (KFGKS). Lys233 provides a ligand contact to ATP. One can recognise an S4 RNA-binding domain in the interval 352-418 (ANLVDWLVTL…GKKKYFLVSY (67 aa)).

Belongs to the class-I aminoacyl-tRNA synthetase family. TyrS type 1 subfamily. In terms of assembly, homodimer.

Its subcellular location is the cytoplasm. The enzyme catalyses tRNA(Tyr) + L-tyrosine + ATP = L-tyrosyl-tRNA(Tyr) + AMP + diphosphate + H(+). Functionally, catalyzes the attachment of tyrosine to tRNA(Tyr) in a two-step reaction: tyrosine is first activated by ATP to form Tyr-AMP and then transferred to the acceptor end of tRNA(Tyr). The sequence is that of Tyrosine--tRNA ligase from Listeria monocytogenes serotype 4a (strain HCC23).